The chain runs to 151 residues: Acidic phospholipase A2 6 (151 aa).

Positions 1–27 are cleaved as a signal peptide; the sequence is MYPAHLLVLLAVCVSLLGAASIPARPL. Intrachain disulfides connect C38–C104, C54–C151, C56–C72, C71–C132, C78–C125, C88–C118, and C111–C123. The Ca(2+) site is built by Y55, G57, and G59. The active site involves H75. Position 76 (D76) interacts with Ca(2+). D126 is an active-site residue.

Belongs to the phospholipase A2 family. Group I subfamily. D49 sub-subfamily. Requires Ca(2+) as cofactor. Expressed by the venom gland.

The protein resides in the secreted. The catalysed reaction is a 1,2-diacyl-sn-glycero-3-phosphocholine + H2O = a 1-acyl-sn-glycero-3-phosphocholine + a fatty acid + H(+). In terms of biological role, PLA2 catalyzes the calcium-dependent hydrolysis of the 2-acyl groups in 3-sn-phosphoglycerides. The polypeptide is Acidic phospholipase A2 6 (Tropidechis carinatus (Australian rough-scaled snake)).